Here is a 501-residue protein sequence, read N- to C-terminus: Protein translocase subunit SecD (501 aa).

6 helical membrane-spanning segments follow: residues 9–29, 339–359, 371–391, 394–414, 447–467, and 470–490; these read NLWLHLLGLVILTLLSAYAVV, AIEQGIKAGILAIILLAVVLI, ISIFLNVLFLLASMAFLGATL, PGIAGIILNMGIAVDSNVLIF, VTLLVASVILFQFGSGPVKGF, and TLALGTIASFISNVYYAKVFL.

This sequence belongs to the SecD/SecF family. SecD subfamily. In terms of assembly, forms a complex with SecF. Part of the essential Sec protein translocation apparatus which comprises SecA, SecYEG and auxiliary proteins SecDF. Other proteins may also be involved.

The protein localises to the cell inner membrane. Part of the Sec protein translocase complex. Interacts with the SecYEG preprotein conducting channel. SecDF uses the proton motive force (PMF) to complete protein translocation after the ATP-dependent function of SecA. In Aquifex aeolicus (strain VF5), this protein is Protein translocase subunit SecD.